Reading from the N-terminus, the 213-residue chain is MDSDKILNAVKEARTLAKPRNFTQSVDLIVNLKELDLTRPENRLKEQIVLPSGRGKDVAIAVIAKGDLAAQAEDMGLTVIRQEELEELGKNKKTAKKIANAHGFFIAQADMMPLVGKSLGPVLGPRGKMPQPVPANANLAPLVARFQKTVAINTRDKSLFQVYIGHESMSDEELAANAEAILNVVSKKYEKGLYHVKSAFTKLTMGAAAPIEK.

This sequence belongs to the universal ribosomal protein uL1 family. As to quaternary structure, part of the 50S ribosomal subunit.

Binds directly to 23S rRNA. Probably involved in E site tRNA release. Functionally, protein L1 is also a translational repressor protein, it controls the translation of its operon by binding to its mRNA. The chain is Large ribosomal subunit protein uL1 from Methanococcus maripaludis (strain C6 / ATCC BAA-1332).